We begin with the raw amino-acid sequence, 238 residues long: MRPSGRKTDQMRKVSFERNFSKHAEGSCLVKFGDTHVLCTASLEEKTPPWLRNSGKGWVTAEYGMLPRATGERMKREAASGKQGGRTQEIQRLIGRSLRAVVDLKELGERQITIDCDVIQADGGTRTASITGAWIALYDCLKWMESRNMIKVERVLKDHIAAISCGIFASQPVIDLDYLEDSSAETDANFVMTGKGGIVEIQGTAEGTPFSEEEFTTLMHLAKNGIAELVELQKQAIA.

Residues R86 and 124-126 (GTR) contribute to the phosphate site.

Belongs to the RNase PH family. As to quaternary structure, homohexameric ring arranged as a trimer of dimers.

The enzyme catalyses tRNA(n+1) + phosphate = tRNA(n) + a ribonucleoside 5'-diphosphate. In terms of biological role, phosphorolytic 3'-5' exoribonuclease that plays an important role in tRNA 3'-end maturation. Removes nucleotide residues following the 3'-CCA terminus of tRNAs; can also add nucleotides to the ends of RNA molecules by using nucleoside diphosphates as substrates, but this may not be physiologically important. Probably plays a role in initiation of 16S rRNA degradation (leading to ribosome degradation) during starvation. This Rhizobium rhizogenes (strain K84 / ATCC BAA-868) (Agrobacterium radiobacter) protein is Ribonuclease PH.